The sequence spans 355 residues: Diacylglycerol O-acyltransferase 2A (355 aa).

The next 2 membrane-spanning stretches (helical) occupy residues 41-61 (LLWC…CSIP) and 62-78 (VLLW…ILVW). N-linked (GlcNAc...) asparagine glycosylation is present at Asn142.

This sequence belongs to the diacylglycerol acyltransferase family.

It localises to the endoplasmic reticulum membrane. The catalysed reaction is an acyl-CoA + a 1,2-diacyl-sn-glycerol = a triacyl-sn-glycerol + CoA. It participates in glycerolipid metabolism; triacylglycerol biosynthesis. In terms of biological role, catalyzes the terminal and only committed step in triacylglycerol synthesis by using diacylglycerol and fatty acyl CoA as substrates. Required for storage lipid synthesis. The chain is Diacylglycerol O-acyltransferase 2A (DGAT2A) from Umbelopsis ramanniana (Oleaginous fungus).